Here is a 465-residue protein sequence, read N- to C-terminus: Cysteine--tRNA ligase (465 aa).

Cys-27 provides a ligand contact to Zn(2+). The 'HIGH' region signature appears at 29–39 (PTVYDEVHIGH). Zn(2+) is bound by residues Cys-204, His-229, and Glu-233. Residues 261-265 (KMSKS) carry the 'KMSKS' region motif. ATP is bound at residue Lys-264.

This sequence belongs to the class-I aminoacyl-tRNA synthetase family. The cofactor is Zn(2+).

It localises to the cytoplasm. The enzyme catalyses tRNA(Cys) + L-cysteine + ATP = L-cysteinyl-tRNA(Cys) + AMP + diphosphate. The polypeptide is Cysteine--tRNA ligase (Metallosphaera sedula (strain ATCC 51363 / DSM 5348 / JCM 9185 / NBRC 15509 / TH2)).